The primary structure comprises 282 residues: ATP synthase gamma chain (282 aa).

It belongs to the ATPase gamma chain family. F-type ATPases have 2 components, CF(1) - the catalytic core - and CF(0) - the membrane proton channel. CF(1) has five subunits: alpha(3), beta(3), gamma(1), delta(1), epsilon(1). CF(0) has three main subunits: a, b and c.

It is found in the cell membrane. Its function is as follows. Produces ATP from ADP in the presence of a proton gradient across the membrane. The gamma chain is believed to be important in regulating ATPase activity and the flow of protons through the CF(0) complex. This chain is ATP synthase gamma chain, found in Clostridium botulinum (strain Kyoto / Type A2).